Consider the following 1962-residue polypeptide: Myosin heavy chain, muscle (1962 aa).

One can recognise a Myosin N-terminal SH3-like domain in the interval 33–82 (DSKKSCWIPDEKEGYLLGEIKATKGDIVSVGLQGGEVRDIKSEKVEKVNP). In terms of domain architecture, Myosin motor spans 86–777 (EKIEDMADMT…VLGQMEEFRD (692 aa)). 179 to 186 (GESGAGKT) provides a ligand contact to ATP. Positions 656 to 678 (LNSLMTTLRSTQPHFVRCIIPNE) are actin-binding. The IQ domain occupies 780–809 (LGKIMSWMQAWARGYLSRKGFKKLQEQRVA). Residues 802–1927 (KLQEQRVALK…KFRAKGRAGS (1126 aa)) adopt a coiled-coil conformation. Disordered stretches follow at residues 1822–1862 (ENEL…NHER) and 1922–1962 (KGRA…ENEF).

Belongs to the TRAFAC class myosin-kinesin ATPase superfamily. Myosin family. In terms of assembly, muscle myosin is a hexameric protein that consists of 2 heavy chain subunits (MHC), 2 alkali light chain subunits (MLC) and 2 regulatory light chain subunits (MLC-2). In terms of tissue distribution, expressed in larval and adult muscles. Isoforms containing exon 9a are expressed in indirect flight muscles, exons 9a and 9b are expressed in jump muscles, exons 9b and 9c are expressed in other larval and adult muscles.

It localises to the cytoplasm. The protein resides in the myofibril. Its function is as follows. Muscle contraction. The protein is Myosin heavy chain, muscle (Mhc) of Drosophila melanogaster (Fruit fly).